The following is a 219-amino-acid chain: Proteasome subunit beta (219 aa).

Positions 1-14 are cleaved as a propeptide — removed in mature form; by autocatalysis; sequence MISNSEYHKEYMKG. Residue threonine 15 is the Nucleophile of the active site.

It belongs to the peptidase T1B family. As to quaternary structure, the 20S proteasome core is composed of 14 alpha and 14 beta subunits that assemble into four stacked heptameric rings, resulting in a barrel-shaped structure. The two inner rings, each composed of seven catalytic beta subunits, are sandwiched by two outer rings, each composed of seven alpha subunits. The catalytic chamber with the active sites is on the inside of the barrel. Has a gated structure, the ends of the cylinder being occluded by the N-termini of the alpha-subunits. Is capped at one or both ends by the proteasome regulatory ATPase, PAN.

It is found in the cytoplasm. The enzyme catalyses Cleavage of peptide bonds with very broad specificity.. Its activity is regulated as follows. The formation of the proteasomal ATPase PAN-20S proteasome complex, via the docking of the C-termini of PAN into the intersubunit pockets in the alpha-rings, triggers opening of the gate for substrate entry. Interconversion between the open-gate and close-gate conformations leads to a dynamic regulation of the 20S proteasome proteolysis activity. Component of the proteasome core, a large protease complex with broad specificity involved in protein degradation. The sequence is that of Proteasome subunit beta from Methanococcus maripaludis (strain C6 / ATCC BAA-1332).